Reading from the N-terminus, the 1003-residue chain is Translation initiation factor IF-2 (1003 aa).

The disordered stretch occupies residues 36–392; sequence SSTIEPPVVK…RQKRNEYESM (357 aa). Positions 62–151 are enriched in low complexity; it reads AAKPAAAKPA…PKPAAAAKPA (90 aa). Composition is skewed to pro residues over residues 178–190 and 213–230; these read DGMPRPMGKPAPK and PRPGGGPRPGGGPRPGGG. 2 stretches are compositionally biased toward gly residues: residues 231–243 and 255–271; these read PRPQGQGRPGGQR and GNRGGQRQGAGAGGPRP. Residues 273–286 show a composition bias toward low complexity; it reads GGPRPQGGSRPQGG. The span at 329–372 shows a compositional bias: gly residues; the sequence is GKGGRGGQAGGGAGGGFNRGGGTGGGAGRGGRRGGTAGAFGRPG. Over residues 376-385 the composition is skewed to basic residues; it reads RRGRKSKRQK. The tr-type G domain occupies 498-670; the sequence is KRPPVVTVMG…VCLTADAELD (173 aa). A G1 region spans residues 507-514; sequence GHVDHGKT. Residue 507–514 coordinates GTP; that stretch reads GHVDHGKT. The tract at residues 532–536 is G2; sequence GITQG. Positions 557 to 560 are G3; it reads DTPG. GTP is bound by residues 557 to 561 and 611 to 614; these read DTPGH and NKID. The interval 611-614 is G4; it reads NKID. Residues 647–649 are G5; sequence SAK.

This sequence belongs to the TRAFAC class translation factor GTPase superfamily. Classic translation factor GTPase family. IF-2 subfamily.

Its subcellular location is the cytoplasm. Its function is as follows. One of the essential components for the initiation of protein synthesis. Protects formylmethionyl-tRNA from spontaneous hydrolysis and promotes its binding to the 30S ribosomal subunits. Also involved in the hydrolysis of GTP during the formation of the 70S ribosomal complex. This is Translation initiation factor IF-2 from Corynebacterium glutamicum (strain R).